Here is a 2602-residue protein sequence, read N- to C-terminus: Filamin-B (2602 aa).

An actin-binding region spans residues 1-239 (MPVTEKDLAE…VMTYLSQFPK (239 aa)). 2 consecutive Calponin-homology (CH) domains span residues 16-122 (KIQQ…LHYS) and 139-242 (QTPK…KAKL). Residue threonine 216 is modified to Phosphothreonine. The segment at 244 to 267 (PGAPLKPKLNPKKARAYGRGIEPT) is disordered. Filamin repeat units lie at residues 249–347 (KPKL…EVSV), 349–446 (KAQG…VVQV), 447–543 (GEAC…EVQV), 544–636 (GPEA…MAFI), 640–736 (TGGY…RVNI), 737–839 (GQGS…RVKV), 840–938 (DPSH…TVGV), 939–1034 (AAPL…TVEA), 1035–1127 (SLPP…KADI), 1128–1222 (EMPF…RVKV), 1223–1322 (EPAV…KVAV), 1323–1415 (TEGC…RVPV), 1416–1511 (KDVV…KVKV), 1512–1608 (LPTY…RIRA), and 1609–1704 (TQTG…TVMA). Threonine 519 is subject to Phosphothreonine. Lysine 681 bears the N6-acetyllysine mark. Residue serine 730 is modified to Phosphoserine. Serine 886, serine 932, serine 983, and serine 1028 each carry phosphoserine. An interaction with FBLP1 region spans residues 1128 to 1511 (EMPFDPSKVV…IPRSPFKVKV (384 aa)). A Phosphothreonine modification is found at threonine 1307. Phosphoserine is present on serine 1316. Residues serine 1433, asparagine 1474, serine 1505, and serine 1602 each carry the phosphoserine modification. The hinge 1 stretch occupies residues 1705-1728 (TDGEVTAVEEAPVNACPPGFRPWV). Filamin repeat units follow at residues 1729–1813 (TEEA…SPLQ), 1816–1908 (VNYP…TAKI), 1919–1994 (KLGS…SIMV), 1997–2089 (SEIG…TVKI), 2091–2185 (GEGR…QFTV), 2188–2280 (LGEG…LVPV), 2282–2375 (APSD…KVRV), and 2379–2471 (GQAG…KAKV). Lysine 1780 carries the post-translational modification N6-acetyllysine. The interval 1862–2148 (SKAEISCIDN…RVTEAEIVPM (287 aa)) is interaction with the cytoplasmic tail of GP1BA. The tract at residues 2060–2225 (SYFPTVPGVY…IWTREAGAGG (166 aa)) is interaction with FLNA 1. A phosphoserine mark is found at serine 2083, serine 2107, and serine 2113. The interval 2130–2602 (SAHVTSPSGR…PGSPFHVTVP (473 aa)) is interaction with INPPL1. Phosphoserine occurs at positions 2369 and 2465. Residue lysine 2468 forms a Glycyl lysine isopeptide (Lys-Gly) (interchain with G-Cter in ISG15) linkage. The hinge 2 stretch occupies residues 2472 to 2506 (TGQRLVSPGSANETSSILVESVTRSSTETCYSAIP). The tract at residues 2472–2602 (TGQRLVSPGS…PGSPFHVTVP (131 aa)) is self-association site, tail. A phosphoserine mark is found at serine 2478, serine 2481, and serine 2492. The Filamin 24 repeat unit spans residues 2507–2601 (KASSDASKVT…IPGSPFHVTV (95 aa)). Residues 2507–2602 (KASSDASKVT…PGSPFHVTVP (96 aa)) are interaction with FLNA 2. 2 positions are modified to N6-succinyllysine: lysine 2518 and lysine 2524. At lysine 2576 the chain carries N6-acetyllysine.

It belongs to the filamin family. As to quaternary structure, homodimer. Interacts with MICALL2. Interacts with RFLNA and RFLNB. Isoform 1 interacts with FBLP1, FLNA, FLNC, GP1BA, INPPL1, ITGB1A, PSEN1 and PSEN2. Isoform 3 interacts with ITGB1A, ITGB1D, ITGB3 and ITGB6. Interacts with MYOT and MYOZ1. Interacts with HBV capsid protein. Interacts with ASB2 isoform 1; the interaction targets FLNB for proteasomal degradation. ISGylation prevents ability to interact with the upstream activators of the JNK cascade and inhibits IFNA-induced JNK signaling. In terms of processing, ubiquitination by a SCF-like complex containing ASB2 isoform 1 leads to proteasomal degradation which promotes muscle differentiation. Ubiquitous. Isoform 1 and isoform 2 are expressed in placenta, bone marrow, brain, umbilical vein endothelial cells (HUVEC), retina and skeletal muscle. Isoform 1 is predominantly expressed in prostate, uterus, liver, thyroid, stomach, lymph node, small intestine, spleen, skeletal muscle, kidney, placenta, pancreas, heart, lung, platelets, endothelial cells, megakaryocytic and erythroleukemic cell lines. Isoform 2 is predominantly expressed in spinal cord, platelet and Daudi cells. Also expressed in thyroid adenoma, neurofibrillary tangles (NFT), senile plaques in the hippocampus and cerebral cortex in Alzheimer disease (AD). Isoform 3 and isoform 6 are expressed predominantly in lung, heart, skeletal muscle, testis, spleen, thymus and leukocytes. Isoform 4 and isoform 5 are expressed in heart.

It is found in the cytoplasm. It localises to the cell cortex. The protein resides in the cytoskeleton. The protein localises to the stress fiber. Its subcellular location is the myofibril. It is found in the sarcomere. It localises to the z line. In terms of biological role, connects cell membrane constituents to the actin cytoskeleton. May promote orthogonal branching of actin filaments and links actin filaments to membrane glycoproteins. Anchors various transmembrane proteins to the actin cytoskeleton. Interaction with FLNA may allow neuroblast migration from the ventricular zone into the cortical plate. Various interactions and localizations of isoforms affect myotube morphology and myogenesis. Isoform 6 accelerates muscle differentiation in vitro. The polypeptide is Filamin-B (FLNB) (Homo sapiens (Human)).